We begin with the raw amino-acid sequence, 247 residues long: Carboxy-S-adenosyl-L-methionine synthase (247 aa).

S-adenosyl-L-methionine-binding positions include Y39, 64–66 (GCS), 89–90 (DN), 117–118 (DI), N132, and R199.

This sequence belongs to the class I-like SAM-binding methyltransferase superfamily. Cx-SAM synthase family. As to quaternary structure, homodimer.

It carries out the reaction prephenate + S-adenosyl-L-methionine = carboxy-S-adenosyl-L-methionine + 3-phenylpyruvate + H2O. Catalyzes the conversion of S-adenosyl-L-methionine (SAM) to carboxy-S-adenosyl-L-methionine (Cx-SAM). The protein is Carboxy-S-adenosyl-L-methionine synthase of Shigella sonnei (strain Ss046).